Reading from the N-terminus, the 186-residue chain is UPF0149 protein Pfl01_5435 (186 aa).

This sequence belongs to the UPF0149 family.

The sequence is that of UPF0149 protein Pfl01_5435 from Pseudomonas fluorescens (strain Pf0-1).